We begin with the raw amino-acid sequence, 580 residues long: CTP synthase (580 aa).

A Glutamine amidotransferase type-1 domain is found at 304-559 (NIILVGKYVS…VAASSGCLDE (256 aa)). Residues Cys403, His532, and Glu534 each act as for GATase activity in the active site.

Belongs to the CTP synthase family.

It catalyses the reaction UTP + L-glutamine + ATP + H2O = CTP + L-glutamate + ADP + phosphate + 2 H(+). It functions in the pathway pyrimidine metabolism; CTP biosynthesis via de novo pathway; CTP from UDP: step 2/2. Functionally, catalyzes the ATP-dependent amination of UTP to CTP with either L-glutamine or ammonia as the source of nitrogen. The chain is CTP synthase (URA7) from Gibberella zeae (strain ATCC MYA-4620 / CBS 123657 / FGSC 9075 / NRRL 31084 / PH-1) (Wheat head blight fungus).